Here is a 73-residue protein sequence, read N- to C-terminus: Large ribosomal subunit protein bL31 (73 aa).

The protein belongs to the bacterial ribosomal protein bL31 family. Type A subfamily. Part of the 50S ribosomal subunit. Contacts protein L9.

Binds the 23S rRNA and interacts with the tRNA in the E site. This Deinococcus radiodurans (strain ATCC 13939 / DSM 20539 / JCM 16871 / CCUG 27074 / LMG 4051 / NBRC 15346 / NCIMB 9279 / VKM B-1422 / R1) protein is Large ribosomal subunit protein bL31 (rpmE).